A 411-amino-acid chain; its full sequence is Probable G-protein coupled receptor AH9.1 (411 aa).

Residues 1 to 18 (MLLFLLRRIFDCRYKYKL) are Cytoplasmic-facing. The chain crosses the membrane as a helical span at residues 19–39 (FVKALVLFLTIVYNAGLVHFF). The Extracellular portion of the chain corresponds to 40–55 (FRTTSLDDSPEMNHVD). A helical membrane pass occupies residues 56-76 (YVAHVIVMPIVLSIGMINQCL). Residues 77–87 (NVCTLLHIRTS) lie on the Cytoplasmic side of the membrane. A helical transmembrane segment spans residues 88–108 (IFLYLKASAIADILSIVAFIP). Residues 109 to 131 (FLFRHAKLIDPSWELGMFYHAHL) are Extracellular-facing. Residues 132–152 (ELPLINALISASALNIVAMTV) traverse the membrane as a helical segment. At 153-176 (DRYVSVCHPIKFFQNNETKPSRRR) the chain is on the cytoplasmic side. The helical transmembrane segment at 177–197 (TMLIIVMIYFIALMIYFPSVF) threads the bilayer. Topologically, residues 198 to 229 (QKKLGVVTDALTNKTIYTIVRNEDVEALQVFK) are extracellular. N-linked (GlcNAc...) asparagine glycosylation occurs at asparagine 210. A helical transmembrane segment spans residues 230-250 (FYLIVRECICRWGPVLLLVIL). The Cytoplasmic portion of the chain corresponds to 251-299 (NMCVVRGLRKIDKRNWFWRQPSQNSRTETLAQRQLRSPRDDRSRISVLL). Residues 300–320 (FVTSATFIICNIPASVISFFV) traverse the membrane as a helical segment. The Extracellular portion of the chain corresponds to 321 to 333 (RRVSGSLFWQIFR). The helical transmembrane segment at 334-354 (AIANLLQVTSYLYNFYLYALC) threads the bilayer. Residues 355–411 (SSEYRHAFLRLFGCRSSLSPTSTGDSPTVRVSVHGKRCHQAVVLLGNENHENPVDEV) lie on the Cytoplasmic side of the membrane.

Belongs to the G-protein coupled receptor 1 family.

The protein resides in the cell membrane. In terms of biological role, not known. Putative receptor. This Caenorhabditis elegans protein is Probable G-protein coupled receptor AH9.1.